The following is a 146-amino-acid chain: Universal stress protein A homolog 2 (146 aa).

The protein belongs to the universal stress protein A family. In terms of assembly, homodimer.

The protein resides in the cytoplasm. Its function is as follows. Involved in stress response. This Coxiella burnetii (strain RSA 493 / Nine Mile phase I) protein is Universal stress protein A homolog 2 (uspA2).